Reading from the N-terminus, the 279-residue chain is Putative pyruvate, phosphate dikinase regulatory protein (279 aa).

Position 157 to 164 (157 to 164) interacts with ADP; the sequence is GVSRTSKT.

Belongs to the pyruvate, phosphate/water dikinase regulatory protein family. PDRP subfamily.

It catalyses the reaction N(tele)-phospho-L-histidyl/L-threonyl-[pyruvate, phosphate dikinase] + ADP = N(tele)-phospho-L-histidyl/O-phospho-L-threonyl-[pyruvate, phosphate dikinase] + AMP + H(+). The enzyme catalyses N(tele)-phospho-L-histidyl/O-phospho-L-threonyl-[pyruvate, phosphate dikinase] + phosphate + H(+) = N(tele)-phospho-L-histidyl/L-threonyl-[pyruvate, phosphate dikinase] + diphosphate. Its function is as follows. Bifunctional serine/threonine kinase and phosphorylase involved in the regulation of the pyruvate, phosphate dikinase (PPDK) by catalyzing its phosphorylation/dephosphorylation. The chain is Putative pyruvate, phosphate dikinase regulatory protein from Lactobacillus helveticus (strain DPC 4571).